We begin with the raw amino-acid sequence, 387 residues long: Natterin-4 (387 aa).

An N-terminal signal peptide occupies residues 1–18 (MKLLVLLVTLLVLSWTSA). Positions 19–46 (EDVGDQEILQQHNEDNNHKSELGEAAPQ) are excised as a propeptide. Over residues 31 to 40 (NEDNNHKSEL) the composition is skewed to basic and acidic residues. Residues 31–57 (NEDNNHKSELGEAAPQRTDNETSQLGQ) are disordered.

This sequence belongs to the natterin family. In terms of processing, contains 4 disulfide bonds. As to expression, expressed by the venom gland.

It is found in the secreted. With respect to regulation, inhibited by tissue-kallikrein inhibitor TKI and trasylol. Plasma kallikrein inhibitor PKSI527 and classical inhibitors of serine-, metallo-, thiol- or aspartate-peptidases evokes a minor inhibition of the peptide digestion. Functionally, shows nociceptive, edema-inducing and kininogenase activity with release of kallidin from low molecular weight kininogen. The cleavage occurs at Met-Lys bonds. This is Natterin-4 from Thalassophryne nattereri (Copper Joe toadfish).